Reading from the N-terminus, the 363-residue chain is Phosphoserine aminotransferase (363 aa).

An L-glutamate-binding site is contributed by arginine 42. Pyridoxal 5'-phosphate contacts are provided by residues 76 to 77, tryptophan 102, threonine 156, aspartate 175, and glutamine 198; that span reads GR. Lysine 199 carries the N6-(pyridoxal phosphate)lysine modification. 240–241 lines the pyridoxal 5'-phosphate pocket; it reads NT.

The protein belongs to the class-V pyridoxal-phosphate-dependent aminotransferase family. SerC subfamily. Homodimer. The cofactor is pyridoxal 5'-phosphate.

It is found in the cytoplasm. The enzyme catalyses O-phospho-L-serine + 2-oxoglutarate = 3-phosphooxypyruvate + L-glutamate. It carries out the reaction 4-(phosphooxy)-L-threonine + 2-oxoglutarate = (R)-3-hydroxy-2-oxo-4-phosphooxybutanoate + L-glutamate. It participates in amino-acid biosynthesis; L-serine biosynthesis; L-serine from 3-phospho-D-glycerate: step 2/3. The protein operates within cofactor biosynthesis; pyridoxine 5'-phosphate biosynthesis; pyridoxine 5'-phosphate from D-erythrose 4-phosphate: step 3/5. Catalyzes the reversible conversion of 3-phosphohydroxypyruvate to phosphoserine and of 3-hydroxy-2-oxo-4-phosphonooxybutanoate to phosphohydroxythreonine. This chain is Phosphoserine aminotransferase, found in Shewanella denitrificans (strain OS217 / ATCC BAA-1090 / DSM 15013).